A 515-amino-acid polypeptide reads, in one-letter code: Brahma-associated protein of 60 kDa (515 aa).

The segment at 1 to 124 is disordered; sequence MSQRFAPGQA…GGSKSDFATA (124 aa). Over residues 17-34 the composition is skewed to pro residues; that stretch reads QPPPPAPGMRPYPPPGAS. The span at 49–62 shows a compositional bias: low complexity; the sequence is PVPGTANVAGVPGV. Residues 90-103 show a composition bias toward gly residues; sequence TGAGGGGVGSGGGS. The interval 116–204 is DNA-binding; it reads GSKSDFATAK…SKEPTNDGEE (89 aa). The SWIB/MDM2 domain maps to 291 to 368; that stretch reads YQPLQFKLDP…PQRLNPLLHP (78 aa).

In terms of assembly, there are 2 distinct Brahma complexes in the fruit fly, the Brahma-associated proteins (BAP) and Polybromo-containing BAP (PBAP) complexes, which are composed of common subunits Brm, Mor, Snr1/Bap45, Bap111/Dalo, Bap55, Bap60 and Act42A/Bap47, and additional signature subunits osa in the BAP complex and Polybromo and Bap170 in the PBAP complex. Interacts with sisA and sc. Interacts with mor. Interacts with p53. Interacts with erm (via N-terminal). Interacts with akirin; interaction is immune stimulation-dependent; activates selected Rel target gene promoters.

In terms of biological role, involved in the recruitment and site-specific anchoring of the Brahma complex at specific promoter sites. The Brahma complex is a multiprotein complex which is the equivalent of the yeast SWI/SNF complex and acts by remodeling the chromatin by catalyzing an ATP-dependent alteration in the structure of nucleosomal DNA. This complex can both serve as a transcriptional coactivator or corepressor, depending on the context. Participates in X-chromosomal dosage compensation. Participates in neurogenesis. The protein is Brahma-associated protein of 60 kDa (Bap60) of Drosophila melanogaster (Fruit fly).